A 219-amino-acid polypeptide reads, in one-letter code: NADH-ubiquinone oxidoreductase 23 kDa subunit, mitochondrial (219 aa).

4Fe-4S ferredoxin-type domains follow at residues arginine 111 to glutamate 140 and threonine 150 to asparagine 179. Residues cysteine 120, cysteine 123, cysteine 126, cysteine 130, cysteine 159, cysteine 162, cysteine 165, and cysteine 169 each coordinate [4Fe-4S] cluster.

This sequence belongs to the complex I 23 kDa subunit family. In terms of assembly, complex I is composed of about 40 different subunits. It depends on [4Fe-4S] cluster as a cofactor.

It is found in the mitochondrion. The enzyme catalyses a ubiquinone + NADH + 5 H(+)(in) = a ubiquinol + NAD(+) + 4 H(+)(out). Its function is as follows. Core subunit of the mitochondrial membrane respiratory chain NADH dehydrogenase (Complex I) that is believed to belong to the minimal assembly required for catalysis. Complex I functions in the transfer of electrons from NADH to the respiratory chain. The immediate electron acceptor for the enzyme is believed to be ubiquinone. May donate electrons to ubiquinone. The polypeptide is NADH-ubiquinone oxidoreductase 23 kDa subunit, mitochondrial (nuo21.3c) (Neurospora crassa (strain ATCC 24698 / 74-OR23-1A / CBS 708.71 / DSM 1257 / FGSC 987)).